The following is a 396-amino-acid chain: S-adenosylmethionine synthase (396 aa).

H16 serves as a coordination point for ATP. D18 lines the Mg(2+) pocket. E44 contributes to the K(+) binding site. E57 and Q100 together coordinate L-methionine. Positions 100-110 (QSPDINQGVDR) are flexible loop. Residues 165–167 (DAK), 231–232 (KF), D240, 246–247 (RK), A263, and K267 contribute to the ATP site. L-methionine is bound at residue D240. K271 is an L-methionine binding site.

It belongs to the AdoMet synthase family. As to quaternary structure, homotetramer; dimer of dimers. It depends on Mg(2+) as a cofactor. K(+) serves as cofactor.

It localises to the cytoplasm. The catalysed reaction is L-methionine + ATP + H2O = S-adenosyl-L-methionine + phosphate + diphosphate. It participates in amino-acid biosynthesis; S-adenosyl-L-methionine biosynthesis; S-adenosyl-L-methionine from L-methionine: step 1/1. Its function is as follows. Catalyzes the formation of S-adenosylmethionine (AdoMet) from methionine and ATP. The overall synthetic reaction is composed of two sequential steps, AdoMet formation and the subsequent tripolyphosphate hydrolysis which occurs prior to release of AdoMet from the enzyme. The chain is S-adenosylmethionine synthase from Ectopseudomonas mendocina (strain ymp) (Pseudomonas mendocina).